The following is a 493-amino-acid chain: Glutamyl-tRNA(Gln) amidotransferase subunit A (493 aa).

Active-site charge relay system residues include Lys-78 and Ser-158. The Acyl-ester intermediate role is filled by Ser-182.

This sequence belongs to the amidase family. GatA subfamily. In terms of assembly, heterotrimer of A, B and C subunits.

The catalysed reaction is L-glutamyl-tRNA(Gln) + L-glutamine + ATP + H2O = L-glutaminyl-tRNA(Gln) + L-glutamate + ADP + phosphate + H(+). Its function is as follows. Allows the formation of correctly charged Gln-tRNA(Gln) through the transamidation of misacylated Glu-tRNA(Gln) in organisms which lack glutaminyl-tRNA synthetase. The reaction takes place in the presence of glutamine and ATP through an activated gamma-phospho-Glu-tRNA(Gln). The protein is Glutamyl-tRNA(Gln) amidotransferase subunit A of Rickettsia canadensis (strain McKiel).